A 134-amino-acid polypeptide reads, in one-letter code: Large ribosomal subunit protein eL32 (134 aa).

This sequence belongs to the eukaryotic ribosomal protein eL32 family.

The protein is Large ribosomal subunit protein eL32 (RpL32) of Drosophila melanogaster (Fruit fly).